A 403-amino-acid chain; its full sequence is Chaperone protein DnaJ (403 aa).

In terms of domain architecture, J spans 4–69 (DYYEILGVAR…DKRRRYDQFG (66 aa)). A CR-type zinc finger spans residues 159-240 (GVEKTIKIKK…CYGEGIKQGE (82 aa)). Zn(2+) is bound by residues Cys-172, Cys-175, Cys-188, Cys-191, Cys-214, Cys-217, Cys-228, and Cys-231. CXXCXGXG motif repeat units follow at residues 172-179 (CRECNGTG), 188-195 (CPTCHGSG), 214-221 (CPTCGGEG), and 228-235 (CPSCYGEG).

This sequence belongs to the DnaJ family. Homodimer. The cofactor is Zn(2+).

The protein localises to the cytoplasm. Participates actively in the response to hyperosmotic and heat shock by preventing the aggregation of stress-denatured proteins and by disaggregating proteins, also in an autonomous, DnaK-independent fashion. Unfolded proteins bind initially to DnaJ; upon interaction with the DnaJ-bound protein, DnaK hydrolyzes its bound ATP, resulting in the formation of a stable complex. GrpE releases ADP from DnaK; ATP binding to DnaK triggers the release of the substrate protein, thus completing the reaction cycle. Several rounds of ATP-dependent interactions between DnaJ, DnaK and GrpE are required for fully efficient folding. Also involved, together with DnaK and GrpE, in the DNA replication of plasmids through activation of initiation proteins. This Chlorobaculum tepidum (strain ATCC 49652 / DSM 12025 / NBRC 103806 / TLS) (Chlorobium tepidum) protein is Chaperone protein DnaJ.